A 306-amino-acid chain; its full sequence is Non-specific ribonucleoside hydrolase RihC (306 aa).

Residue His-235 is part of the active site.

This sequence belongs to the IUNH family. RihC subfamily.

In terms of biological role, hydrolyzes both purine and pyrimidine ribonucleosides with a broad-substrate specificity. The chain is Non-specific ribonucleoside hydrolase RihC from Salmonella schwarzengrund (strain CVM19633).